A 91-amino-acid polypeptide reads, in one-letter code: Large ribosomal subunit protein bL31B (91 aa).

It belongs to the bacterial ribosomal protein bL31 family. Type B subfamily. In terms of assembly, part of the 50S ribosomal subunit.

This is Large ribosomal subunit protein bL31B from Neisseria gonorrhoeae (strain NCCP11945).